The sequence spans 752 residues: Sialidase 85-1.1 (752 aa).

A signal peptide spans 1–23 (MSRRVFASAVLLLIVVTMCCGGA). 2 BNR repeats span residues 274 to 285 (IYSKDNGSTWSL) and 319 to 330 (YVSRDMGTTWTE). The tract at residues 693-725 (APEPQVKIAPKPAAPAAPAGNEETARETGDGGA) is disordered. Residues 701 to 711 (APKPAAPAAPA) show a composition bias toward low complexity.

Belongs to the glycosyl hydrolase 33 family.

The catalysed reaction is Hydrolysis of alpha-(2-&gt;3)-, alpha-(2-&gt;6)-, alpha-(2-&gt;8)- glycosidic linkages of terminal sialic acid residues in oligosaccharides, glycoproteins, glycolipids, colominic acid and synthetic substrates.. Its function is as follows. Developmentally regulated neuraminidase implicated in parasite invasion of cells. May contribute to the pathology during T.cruzi infection by cleaving sialic acid from cells of the immune system. This is Sialidase 85-1.1 (SA85-1.1) from Trypanosoma cruzi.